Reading from the N-terminus, the 147-residue chain is Large ribosomal subunit protein uL13 (147 aa).

Belongs to the universal ribosomal protein uL13 family. Part of the 50S ribosomal subunit.

This protein is one of the early assembly proteins of the 50S ribosomal subunit, although it is not seen to bind rRNA by itself. It is important during the early stages of 50S assembly. In Frankia casuarinae (strain DSM 45818 / CECT 9043 / HFP020203 / CcI3), this protein is Large ribosomal subunit protein uL13.